A 1203-amino-acid chain; its full sequence is Zinc finger and BTB domain-containing protein 38 (1203 aa).

Residues 33 to 100 enclose the BTB domain; it reads CDVTIIVEDT…IYSSTVVVRR (68 aa). A Glycyl lysine isopeptide (Lys-Gly) (interchain with G-Cter in SUMO2) cross-link involves residue lysine 43. Residue serine 130 is modified to Phosphoserine. Residues lysine 145, lysine 148, lysine 151, and lysine 260 each participate in a glycyl lysine isopeptide (Lys-Gly) (interchain with G-Cter in SUMO2) cross-link. Residues 230-334 are disordered; it reads EAYRSQPLRE…PSETPGPPAA (105 aa). The segment covering 269–280 has biased composition (polar residues); that stretch reads TQTQDSDSTTEN. The segment at 299–522 is interaction with CBFA2T3; the sequence is PAPILSHSEP…RRYQCIFCLE (224 aa). The span at 313–322 shows a compositional bias: basic and acidic residues; the sequence is GDVHFPREDE. The segment at 341 to 363 adopts a C2H2-type 1 zinc-finger fold; it reads YNCSCCSKSFDSSTLLGAHMQLH. The segment at 370–394 adopts a C2H2-type 2; degenerate zinc-finger fold; it reads FVCKYCNKQFTTLNRLDRHEQICMR. C2H2-type zinc fingers lie at residues 459-481, 487-509, and 515-538; these read YSCV…ANVH, YPCH…EIWH, and YQCI…KSFH. Residues lysine 549 and lysine 556 each participate in a glycyl lysine isopeptide (Lys-Gly) (interchain with G-Cter in SUMO2) cross-link. Composition is skewed to polar residues over residues 581-598, 607-628, 635-644, and 731-741; these read RNSS…NESP, LPSS…TSSP, PSWQGTPTSA, and SNHQSPSQPVA. 2 disordered regions span residues 581–644 and 731–776; these read RNSS…PTSA and SNHQ…VPCN. A compositionally biased stretch (basic and acidic residues) spans 747–757; the sequence is KDSKPEADKAS. Residues lysine 750, lysine 755, lysine 796, lysine 806, lysine 813, lysine 834, lysine 842, and lysine 849 each participate in a glycyl lysine isopeptide (Lys-Gly) (interchain with G-Cter in SUMO2) cross-link. Disordered regions lie at residues 857–882 and 895–914; these read KPKY…SPLG and FDEV…YYNY. The span at 866–877 shows a compositional bias: basic and acidic residues; that stretch reads TLPRESDPETRG. Residues lysine 915, lysine 971, lysine 976, lysine 984, lysine 988, lysine 998, lysine 1024, and lysine 1033 each participate in a glycyl lysine isopeptide (Lys-Gly) (interchain with G-Cter in SUMO2) cross-link. 5 consecutive C2H2-type zinc fingers follow at residues 1017-1039, 1045-1067, 1073-1095, 1101-1123, and 1132-1154; these read YICE…MRCH, YQCK…ERIH, FICQ…ERIH, YHCQ…ERRH, and FACF…QKKH. Glycyl lysine isopeptide (Lys-Gly) (interchain with G-Cter in SUMO2) cross-links involve residues lysine 1116, lysine 1139, lysine 1142, lysine 1157, and lysine 1190. A disordered region spans residues 1172–1203; it reads NSDLLESQPCTDSEDSDQKDDIKKPLLKMSFE.

In terms of assembly, interacts with CBFA2T3, ZBTB4 and RBBP6. Post-translationally, ubiquitinated by RBBP6; leading to its degradation by the proteasome. As to expression, widely expressed throughout the adult brain where it is found mainly in neurons. Also expressed in the adrenal medulla. Not detected in non-neural tissues including heart, spleen, liver and muscle. In the embryo, expressed in the developing brain and spinal cord but not in the migratory neural crest. Also expressed in the limbs, transiently in somites, and in the embryonic liver. In the embryonic neural tube, expression is restricted to late postmitotic neurons.

It is found in the nucleus. It localises to the chromosome. In terms of biological role, transcriptional regulator with bimodal DNA-binding specificity. Binds with a higher affinity to methylated CpG dinucleotides in the consensus sequence 5'-CGCG-3' but can also bind to E-box elements (5'-CACGTG-3'). Can also bind specifically to a single methyl-CpG pair. Represses transcription in a methyl-CpG-dependent manner. Plays an important role in regulating DNA-replication and common fragile sites (CFS) stability in a RBBP6- and MCM10-dependent manner; represses expression of MCM10 which plays an important role in DNA-replication. Acts as a transcriptional activator. May be involved in the differentiation and/or survival of late postmitotic neurons. The polypeptide is Zinc finger and BTB domain-containing protein 38 (Rattus norvegicus (Rat)).